Reading from the N-terminus, the 96-residue chain is MEIKTTAVAGTLESSDIQIMLMAGDNGIQIDLESDVIKQFGAQIKHVITTTLQQLNIDNVKVRAVDKGALDCVIKARTITAAQRALETTTPAWEVL.

Ser14 is subject to O-(phosphoribosyl dephospho-coenzyme A)serine.

It belongs to the CitD family. Oligomer with a subunit composition of (alpha,beta,gamma)6.

Its subcellular location is the cytoplasm. In terms of biological role, covalent carrier of the coenzyme of citrate lyase. The protein is Citrate lyase acyl carrier protein of Lactiplantibacillus plantarum (strain ATCC BAA-793 / NCIMB 8826 / WCFS1) (Lactobacillus plantarum).